The primary structure comprises 97 residues: UstYa family oxidase VicYc (97 aa).

2 short sequence motifs (HXXHC) span residues 11–15 (HELHC) and 38–42 (HANHC).

Belongs to the ustYa family.

Its pathway is mycotoxin biosynthesis. In terms of biological role, ustYa family oxidase, part of the gene cluster that mediates the biosynthesis of the secondary metabolite victorin, the molecular basis for Victoria blight of oats. The role of vicYc within the pathway has still to be determined. The pathway starts with the processing of the precursor vicA1 by several endopeptidases including kexin proteases as well as the cluster-specific S28 family peptidases vicPa and vicPb to produce 7 identical copies of the hexapeptide Gly-Leu-Lys-Leu-Ala-Phe. After being excised from the precursor peptide, the core peptides are cyclized and modified post-translationally by enzymes encoded within the gene cluster. The ustYa family oxidase vicYb is required for the formation of the macrocycle in victorin and the copper amine oxidases (CAOs) vicK1 and vicK2 are responsible for converting victorin to the active form by oxidizing the N-terminal glycyl residue in the peptides to glyoxylate. Relaxed substrate specificity of enzymes in the victorin biosynthetic pathway results in a metabolic grid that produces a set of analogs including victorinines B, C, E or HV-toxin M. This chain is UstYa family oxidase VicYc, found in Bipolaris victoriae (strain FI3) (Victoria blight of oats agent).